The chain runs to 465 residues: MKMTMMCDESIEENNKSSTVELNHNEKDGRIHSIIINFHPITHEQSNNQFYIQTLHEILKYIIDKKLNLVHFETRPTLTLSNANRDVQYSCLITLEANEINMSLLYEELRGNSFISGINLLNNQESEDWYPKHISDLDKCQHLLRKFQPELQTDHPGFHDKVYRERREAIAKIAFQYKYGDRIPEVEYTKEEIETWGLVFTKMKAVHASRACREYIDGFQLLEKYCNYNSESIPQLQTICEFMHRTSGFRIRPVAGLVSPKDFLASLAFRVFQCTQYIRHHSRPMHTPEPDCIHELIGHMPMLVNRQFADFSQELGLASLGASEEEITRLSTLYWFTVEFGLCNENGETRALGAGIMSSYGELENAFSDLSVKEPFNINDAAVQVYDDVGYQKIYFVTESIESMKRELRNYINTSGKSTIPIYDPITETVHMKSRFSIRKELLKHVKEEIGQLDTLLNHSNYTLP.

Fe cation is bound by residues H294, H299, and E339.

The protein belongs to the biopterin-dependent aromatic amino acid hydroxylase family. The cofactor is Fe(2+).

It localises to the cytoplasm. The protein resides in the perinuclear region. It catalyses the reaction (6R)-L-erythro-5,6,7,8-tetrahydrobiopterin + L-tyrosine + O2 = (4aS,6R)-4a-hydroxy-L-erythro-5,6,7,8-tetrahydrobiopterin + L-dopa. Its pathway is catecholamine biosynthesis; dopamine biosynthesis; dopamine from L-tyrosine: step 1/2. The polypeptide is Tyrosine 3-monooxygenase (TH) (Schistosoma mansoni (Blood fluke)).